A 306-amino-acid chain; its full sequence is Acetaldehyde dehydrogenase (306 aa).

The Acyl-thioester intermediate role is filled by Cys-131. NAD(+) is bound by residues 162-170 (SAGPGTRKN) and Asn-273.

It belongs to the acetaldehyde dehydrogenase family.

The catalysed reaction is acetaldehyde + NAD(+) + CoA = acetyl-CoA + NADH + H(+). The polypeptide is Acetaldehyde dehydrogenase (Albidiferax ferrireducens (strain ATCC BAA-621 / DSM 15236 / T118) (Rhodoferax ferrireducens)).